A 399-amino-acid polypeptide reads, in one-letter code: Nicotinate phosphoribosyltransferase (399 aa).

Position 217 is a phosphohistidine; by autocatalysis (His217).

This sequence belongs to the NAPRTase family. Post-translationally, transiently phosphorylated on a His residue during the reaction cycle. Phosphorylation strongly increases the affinity for substrates and increases the rate of nicotinate D-ribonucleotide production. Dephosphorylation regenerates the low-affinity form of the enzyme, leading to product release.

The catalysed reaction is nicotinate + 5-phospho-alpha-D-ribose 1-diphosphate + ATP + H2O = nicotinate beta-D-ribonucleotide + ADP + phosphate + diphosphate. The protein operates within cofactor biosynthesis; NAD(+) biosynthesis; nicotinate D-ribonucleotide from nicotinate: step 1/1. In terms of biological role, catalyzes the synthesis of beta-nicotinate D-ribonucleotide from nicotinate and 5-phospho-D-ribose 1-phosphate at the expense of ATP. In Burkholderia mallei (strain ATCC 23344), this protein is Nicotinate phosphoribosyltransferase.